Reading from the N-terminus, the 366-residue chain is Chorismate synthase (366 aa).

NADP(+)-binding residues include arginine 48 and arginine 54. Residues 125-127, 241-242, glycine 285, 300-304, and arginine 326 each bind FMN; these read RSS, NA, and KPTSS.

It belongs to the chorismate synthase family. In terms of assembly, homotetramer. FMNH2 serves as cofactor.

The enzyme catalyses 5-O-(1-carboxyvinyl)-3-phosphoshikimate = chorismate + phosphate. The protein operates within metabolic intermediate biosynthesis; chorismate biosynthesis; chorismate from D-erythrose 4-phosphate and phosphoenolpyruvate: step 7/7. In terms of biological role, catalyzes the anti-1,4-elimination of the C-3 phosphate and the C-6 proR hydrogen from 5-enolpyruvylshikimate-3-phosphate (EPSP) to yield chorismate, which is the branch point compound that serves as the starting substrate for the three terminal pathways of aromatic amino acid biosynthesis. This reaction introduces a second double bond into the aromatic ring system. The chain is Chorismate synthase from Cereibacter sphaeroides (strain ATCC 17029 / ATH 2.4.9) (Rhodobacter sphaeroides).